Consider the following 272-residue polypeptide: Putative MgpC-like protein MPN_366 (272 aa).

Disordered stretches follow at residues 65 to 84 and 171 to 196; these read QESQ…TSGS and GSGQ…PMPS. Over residues 72-84 the composition is skewed to low complexity; sequence NGSQSGSSDTSGS. Residues 173–187 are compositionally biased toward polar residues; sequence GQESSWNSQRSQKGL.

This sequence belongs to the MgpC family.

The sequence is that of Putative MgpC-like protein MPN_366 from Mycoplasma pneumoniae (strain ATCC 29342 / M129 / Subtype 1) (Mycoplasmoides pneumoniae).